The primary structure comprises 745 residues: Meiotic driver SPOK3 (745 aa).

Positions 4–34 (KDRITQLLRELEEAKAREAQERCEKERLQLE) form a coiled coil. Disordered regions lie at residues 173–222 (ELTQ…DGVG) and 407–487 (LSSA…VDPQ). Over residues 188–197 (TSDRSLERRQ) the composition is skewed to basic and acidic residues. 2 stretches are compositionally biased toward polar residues: residues 208–217 (KSKYICSNRQ) and 409–422 (SAPSSQNTDISEYT). Positions 214–325 (SNRQPDGVGI…LLLYVDRDDW (112 aa)) are required for antidote activity. Residues 466 to 482 (AKRERGPSSGGKDDGRS) show a composition bias toward basic and acidic residues. The interval 491–745 (QYCTQACLLG…SPMATPSHGG (255 aa)) is required for poison activity.

It is found in the cytoplasm. Its subcellular location is the nucleus. Promotes unequal transmission of alleles from the parental zygote to progeny spores by acting as poison/antidote system, leading to poisoning of progeny that do not inherit the allele. May possess DNA nuclease activity that leads to spore killing, and a kinase activity that confers resistance to the nuclease activity. In Podospora anserina (Pleurage anserina), this protein is Meiotic driver SPOK3.